Consider the following 751-residue polypeptide: Cytosolic neutral trehalase (751 aa).

Polar residues predominate over residues 1-10; that stretch reads MSQVNTSQGP. The disordered stretch occupies residues 1-59; it reads MSQVNTSQGPVAQGRQRRLSSLSEFNDPFSNAEVYYGPPTDPRKQKQAKPAKINRTRTM. At serine 2 the chain carries N-acetylserine. Residues serine 20 and serine 21 each carry the phosphoserine; by PKA modification. Serine 23 bears the Phosphoserine mark. The segment covering 45-55 has biased composition (basic residues); sequence QKQAKPAKINR. Threonine 58 carries the post-translational modification Phosphothreonine. Residue serine 60 is modified to Phosphoserine; by PKA. A Phosphoserine modification is found at serine 66. The segment at 73–92 is disordered; the sequence is FGKLQQTRRGSEDDTYSSSQ. The residue at position 83 (serine 83) is a Phosphoserine; by PKA. Residues aspartate 114, aspartate 116, asparagine 118, glutamine 120, and aspartate 125 each coordinate Ca(2+). Residues arginine 302, 309–310, asparagine 346, 355–357, glutamate 424, arginine 473, and glycine 476 each bind substrate; these read WD and RSQ. Catalysis depends on proton donor/acceptor residues aspartate 478 and glutamate 674.

It belongs to the glycosyl hydrolase 37 family. As to quaternary structure, monomer. Interacts with BMH1 dimers; the interaction is direct and activates NTH1. Interacts with BMH2. Ca(2+) is required as a cofactor. Phosphorylated by protein kinase A (PKA); phosphorylation at Ser-60 and Ser-83 is required for activation by the 14-3-3 proteins BMH1 and BMH2.

The protein resides in the cytoplasm. The catalysed reaction is alpha,alpha-trehalose + H2O = alpha-D-glucose + beta-D-glucose. The protein operates within carbohydrate degradation. Its activity is regulated as follows. Activated by calcium. Activated by protein kinase A (PKA)-mediated phosphorylation. In terms of biological role, hydrolyzes intracellular trehalose to glucose. The disaccharide trehalose serves as a storage carbohydrate that is mobilized during nutrient stress. Regulates the level of trehalose as a protectant for cell integrity during heat stress. The chain is Cytosolic neutral trehalase from Saccharomyces cerevisiae (strain ATCC 204508 / S288c) (Baker's yeast).